A 382-amino-acid polypeptide reads, in one-letter code: Protein shisa-9A (382 aa).

Residues 1 to 26 (MKWTVLLLEYFLVKVLVLLYSADGEA) form the signal peptide. Residues 27 to 132 (QQLEGFIMLS…DPRHDPTKDK (106 aa)) are Extracellular-facing. Residue Asn-39 is glycosylated (N-linked (GlcNAc...) asparagine). The chain crosses the membrane as a helical span at residues 133–153 (TNLIVYIICGVVAIMALVGIF). Residues 154–382 (TKLGLEKAHR…VTNSKAEVTV (229 aa)) lie on the Cytoplasmic side of the membrane.

Belongs to the shisa family. SHISA9 subfamily. In terms of assembly, component of some AMPA receptors (ionotropic glutamate receptors) complex.

The protein resides in the cell projection. It localises to the dendritic spine membrane. Its subcellular location is the synapse. In terms of biological role, regulator of short-term neuronal synaptic plasticity in the dentate gyrus. Associates with AMPA receptors (ionotropic glutamate receptors) in synaptic spines and promotes AMPA receptor desensitization at excitatory synapses. The chain is Protein shisa-9A (shisa9a) from Danio rerio (Zebrafish).